Consider the following 266-residue polypeptide: E3 ubiquitin-protein ligase RNF170 (266 aa).

Residues 1–26 (MEGSVCVDGAAAPAPDEASLIEGVSN) are Lumenal-facing. Residues 27–47 (AVLLVLVLSVTLLAGLTTLLC) traverse the membrane as a helical segment. Residues 48-209 (RSEQQRIHPE…GGLFWMFRVR (162 aa)) lie on the Cytoplasmic side of the membrane. An RING-type zinc finger spans residues 88 to 131 (CPVCLQQAVLPVETNCGHLFCGSCIIAYWRYGTWLGAISCPICR). The chain crosses the membrane as a helical span at residues 210–230 (ILLCVCGALAYLVSPLDFLPE). Residue glycine 231 is a topological domain, lumenal. A helical transmembrane segment spans residues 232–252 (VLGLLGFLDDFFVILLLFIYI). The Cytoplasmic segment spans residues 253-266 (SIMYREVVTQRLAG).

As to expression, highly expressed in the developing brain, and less within intersomitic structures of the trunk.

Its subcellular location is the endoplasmic reticulum membrane. The catalysed reaction is S-ubiquitinyl-[E2 ubiquitin-conjugating enzyme]-L-cysteine + [acceptor protein]-L-lysine = [E2 ubiquitin-conjugating enzyme]-L-cysteine + N(6)-ubiquitinyl-[acceptor protein]-L-lysine.. It participates in protein modification; protein ubiquitination. Functionally, E3 ubiquitin-protein ligase that plays an essential role in stimulus-induced inositol 1,4,5-trisphosphate receptor (ITPR) ubiquitination and degradation via the endoplasmic reticulum-associated degradation (ERAD) pathway. Also involved in ITPR turnover in resting cells. The sequence is that of E3 ubiquitin-protein ligase RNF170 (rnf170) from Danio rerio (Zebrafish).